The primary structure comprises 364 residues: Medium-wave-sensitive opsin 2 (364 aa).

Residues 1–23 (MAQQWSLQRLAGRHPQDSYEDST) form a disordered region. The Extracellular portion of the chain corresponds to 1-52 (MAQQWSLQRLAGRHPQDSYEDSTQSSIFTYTNSNSTRGPFEGPNYHIAPRWV). The required for 11-cis-retinal regeneration stretch occupies residues 17-43 (DSYEDSTQSSIFTYTNSNSTRGPFEGP). A glycan (N-linked (GlcNAc...) asparagine) is linked at Asn-34. The chain crosses the membrane as a helical span at residues 53 to 77 (YHLTSVWMIFVVIASVFTNGLVLAA). The Cytoplasmic portion of the chain corresponds to 78–89 (TMKFKKLRHPLN). A helical membrane pass occupies residues 90 to 115 (WILVNLAVADLAETVIASTISVVNQV). Over 116–129 (YGYFVLGHPMCVLE) the chain is Extracellular. Cys-126 and Cys-203 are joined by a disulfide. The chain crosses the membrane as a helical span at residues 130-149 (GYTVSLCGITGLWSLAIISW). Over 150–168 (ERWMVVCKPFGNVRFDAKL) the chain is Cytoplasmic. The chain crosses the membrane as a helical span at residues 169 to 192 (AIVGIAFSWIWAAVWTAPPIFGWS). Over 193–218 (RYWPHGLKTSCGPDVFSGSSYPGVQS) the chain is Extracellular. The chain crosses the membrane as a helical span at residues 219 to 246 (YMIVLMVTCCITPLSIIVLCYLQVWLAI). Residues 247–268 (RAVAKQQKESESTQKAEKEVTR) lie on the Cytoplasmic side of the membrane. A helical transmembrane segment spans residues 269–292 (MVVVMVLAFCFCWGPYAFFACFAA). The Extracellular portion of the chain corresponds to 293–300 (ANPGYPFH). Residues 301 to 325 (PLMAALPAFFAKSATIYNPVIYVFM) form a helical membrane-spanning segment. An N6-(retinylidene)lysine modification is found at Lys-312. Residues 326-364 (NRQFRNCILQLFGKKVDDGSELSSASKTEVSSVSSVSPA) lie on the Cytoplasmic side of the membrane.

It belongs to the G-protein coupled receptor 1 family. Opsin subfamily. N-glycosylated. O-glycosylated. In terms of processing, phosphorylated on some or all of the serine and threonine residues present in the C-terminal region.

It localises to the cell membrane. Functionally, visual pigments are the light-absorbing molecules that mediate vision. They consist of an apoprotein, opsin, covalently linked to cis-retinal. The protein is Medium-wave-sensitive opsin 2 of Homo sapiens (Human).